The following is a 377-amino-acid chain: tRNA(Met) cytidine acetate ligase (377 aa).

ATP-binding positions include 7–20 (ITEYNPFHNGHLFH), Gly-100, Asn-153, and Arg-178.

Belongs to the TmcAL family.

It localises to the cytoplasm. It carries out the reaction cytidine(34) in elongator tRNA(Met) + acetate + ATP = N(4)-acetylcytidine(34) in elongator tRNA(Met) + AMP + diphosphate. Its function is as follows. Catalyzes the formation of N(4)-acetylcytidine (ac(4)C) at the wobble position of elongator tRNA(Met), using acetate and ATP as substrates. First activates an acetate ion to form acetyladenylate (Ac-AMP) and then transfers the acetyl group to tRNA to form ac(4)C34. The polypeptide is tRNA(Met) cytidine acetate ligase (Staphylococcus epidermidis (strain ATCC 35984 / DSM 28319 / BCRC 17069 / CCUG 31568 / BM 3577 / RP62A)).